The following is a 715-amino-acid chain: MEDISTIKKLEGLSVHCEDNNNNNNNNNNKENINNDDNNINPNRNATSSLLKGNIQQVKKKKVFARLHLFNRDGTVKQIVEMRKYKFIIGSDQKSTDILITRPGVYSNHAEIIYDKEVRKFYLNPLVDPSISDTIRINFIPFINKKEVLGNNDIISIGLRAFRIEFFAPVYVDNLILPKNIQPQQQQQKQQQQQQQQQQAPTAQKKLKQEVEHILTAATTTPTTTTTKPKKLKTAPPTTVASSSTIPKTTTTKKQAIEQPSKSNLKSSQNKLSTTTTTTITSKPPLNKSSIDGDTRSESSKALQGLKPKEQKKDIMKSLISSKKANTHEEKEEGESEEEEEEEEEEEEEEEEEEEEEQLEDKQKQTKTPISQNKSASSNIKPLSKTSKSNPPPLSAATKSNPVVKKITSTTVTRTTKKADTETKQEIKITKSSTTTKQQTQEEIEQELKLESIRKRIEQFINKFEKEINDNDFKDLDEGKRKIKESLDFISKTKYEFQGTTSNPGDVESTPLDKWFKNIPYEDFVDSFKLKYYSIITEPVSITSILNKLKSGPNYQLAEVLKDFKQMLINVTLYHKEPNEYWWISHQCNIQFYKSLLETGLITQDQYQIQYQTSNNEIVKLDKTLNLVPKLVVVENNDEDDNNDDEGSKKAVLVDEDEDECLNNQNNPTTYDSDGDFVTKQSDQESDEESDEESDEESDEERDQLSEEEDQEATN.

Disordered stretches follow at residues E18 to A46 and Q186 to Q425. 5 stretches are compositionally biased toward low complexity: residues N20–N45, Q186–Q204, L215–T227, T234–K254, and S261–T281. Residues K307–M316 are compositionally biased toward basic and acidic residues. Residues S322 to T368 are a coiled coil. Over residues E332–L359 the composition is skewed to acidic residues. The segment covering T366–S389 has biased composition (polar residues). Over residues K405–R414 the composition is skewed to low complexity. Positions K437–D470 form a coiled coil. The Bromo domain maps to K474–T599. The interval L653–N715 is disordered. Residues L662 to D672 show a composition bias toward polar residues. A compositionally biased stretch (acidic residues) spans Q684–N715.

In Dictyostelium discoideum (Social amoeba), this protein is Bromodomain-containing protein DDB_G0278469.